The following is a 90-amino-acid chain: Sakacin-A immunity factor (90 aa).

Functionally, imparts immunity to sakacin-A to naturally sensitive host strains. In Latilactobacillus sakei (Lactobacillus sakei), this protein is Sakacin-A immunity factor (saiA).